The sequence spans 311 residues: 4-diphosphocytidyl-2-C-methyl-D-erythritol kinase (311 aa).

K10 is an active-site residue. 105-115 provides a ligand contact to ATP; it reads PVAGGMAGGSA. D146 is a catalytic residue.

This sequence belongs to the GHMP kinase family. IspE subfamily.

It catalyses the reaction 4-CDP-2-C-methyl-D-erythritol + ATP = 4-CDP-2-C-methyl-D-erythritol 2-phosphate + ADP + H(+). It participates in isoprenoid biosynthesis; isopentenyl diphosphate biosynthesis via DXP pathway; isopentenyl diphosphate from 1-deoxy-D-xylulose 5-phosphate: step 3/6. Functionally, catalyzes the phosphorylation of the position 2 hydroxy group of 4-diphosphocytidyl-2C-methyl-D-erythritol. The protein is 4-diphosphocytidyl-2-C-methyl-D-erythritol kinase of Corynebacterium glutamicum (strain ATCC 13032 / DSM 20300 / JCM 1318 / BCRC 11384 / CCUG 27702 / LMG 3730 / NBRC 12168 / NCIMB 10025 / NRRL B-2784 / 534).